Consider the following 192-residue polypeptide: Large ribosomal subunit protein uL5 (192 aa).

This sequence belongs to the universal ribosomal protein uL5 family. In terms of assembly, part of the 50S ribosomal subunit; part of the 5S rRNA/L5/L18/L25 subcomplex. Contacts the 5S rRNA and the P site tRNA. Forms a bridge to the 30S subunit in the 70S ribosome.

Its function is as follows. This is one of the proteins that bind and probably mediate the attachment of the 5S RNA into the large ribosomal subunit, where it forms part of the central protuberance. In the 70S ribosome it contacts protein S13 of the 30S subunit (bridge B1b), connecting the 2 subunits; this bridge is implicated in subunit movement. Contacts the P site tRNA; the 5S rRNA and some of its associated proteins might help stabilize positioning of ribosome-bound tRNAs. This is Large ribosomal subunit protein uL5 from Sphingopyxis alaskensis (strain DSM 13593 / LMG 18877 / RB2256) (Sphingomonas alaskensis).